Consider the following 354-residue polypeptide: MGFCIPLRSKMLKRGSRKSSSILARRPTPKKMNIVTDLENRLKKNSYIENTNQGNILMDSIFVSTMPVETLFGSYITDDSDDYELKDLLNVTYNIKPVIVPDIKLDAVLDRDGNFRPADCFLVKLKHRDGFTKGALYLGHSAGFTATICLKNEGVSGLYIPGTSVIRSNICQGDTIVSRSSRGVQFLPQIGGEAIFLIVSLCPTKKLVETGFVIPEISSNDNAKIAARILSEKRKDTIAHIDTLIQHRQQLELAYYNSCMLTEFLHYCNSYADTIKESLLKETIQKDINITHTNITTLLNETAKVIKLVKSLVDKEDTDIVNNFITKEIKNCGGVKNRDKIVNSLSLSNLDFRL.

The protein belongs to the orthopoxvirus OPG055 family.

In terms of biological role, stimulates increases in peripheral microtubule dynamics and may increase the motility of the infected cells, contributing to cell-to-cell spread of the virus. Seems to inhibit the signaling via the GTPase RHOA and DIAPH1/mDia. This is Protein OPG055 (OPG055) from Homo sapiens (Human).